The primary structure comprises 209 residues: Urease accessory protein UreG (209 aa).

A GTP-binding site is contributed by 11–18 (GPVGSGKT).

It belongs to the SIMIBI class G3E GTPase family. UreG subfamily. In terms of assembly, homodimer. UreD, UreF and UreG form a complex that acts as a GTP-hydrolysis-dependent molecular chaperone, activating the urease apoprotein by helping to assemble the nickel containing metallocenter of UreC. The UreE protein probably delivers the nickel.

It localises to the cytoplasm. Its function is as follows. Facilitates the functional incorporation of the urease nickel metallocenter. This process requires GTP hydrolysis, probably effectuated by UreG. The chain is Urease accessory protein UreG from Edwardsiella ictaluri (strain 93-146).